Reading from the N-terminus, the 119-residue chain is Large ribosomal subunit protein bL20 (119 aa).

Belongs to the bacterial ribosomal protein bL20 family.

In terms of biological role, binds directly to 23S ribosomal RNA and is necessary for the in vitro assembly process of the 50S ribosomal subunit. It is not involved in the protein synthesizing functions of that subunit. This is Large ribosomal subunit protein bL20 from Syntrophus aciditrophicus (strain SB).